A 392-amino-acid polypeptide reads, in one-letter code: Major outer membrane porin (392 aa).

Residues 1 to 22 (MKKLLKSALLFAAAGSALSLQA) form the signal peptide.

This sequence belongs to the chlamydial porin (CP) (TC 1.B.2) family. Part of a disulfide cross-linked outer membrane complex (COMC) composed of the major outer membrane porin (MOMP), the small cysteine-rich protein (OmcA) and the large cysteine-rich periplasmic protein (OmcB).

The protein localises to the cell outer membrane. Functionally, in elementary bodies (EBs, the infectious stage, which is able to survive outside the host cell) provides the structural integrity of the outer envelope through disulfide cross-links with the small cysteine-rich protein and the large cysteine-rich periplasmic protein. It has been described in publications as the Sarkosyl-insoluble COMC (Chlamydia outer membrane complex), and serves as the functional equivalent of peptidoglycan. Its function is as follows. Permits diffusion of specific solutes through the outer membrane. This Chlamydia psittaci (Chlamydophila psittaci) protein is Major outer membrane porin (ompA).